Here is a 178-residue protein sequence, read N- to C-terminus: uncharacterized protein (178 aa).

Positions 1-19 are cleaved as a signal peptide; sequence MKKNIHILGASGVGTSTLG.

This is an uncharacterized protein from Bacillus subtilis (strain 168).